A 158-amino-acid chain; its full sequence is Small ribosomal subunit protein uS7 (158 aa).

This sequence belongs to the universal ribosomal protein uS7 family. In terms of assembly, part of the 30S ribosomal subunit. Contacts proteins S9 and S11.

One of the primary rRNA binding proteins, it binds directly to 16S rRNA where it nucleates assembly of the head domain of the 30S subunit. Is located at the subunit interface close to the decoding center, probably blocks exit of the E-site tRNA. The polypeptide is Small ribosomal subunit protein uS7 (Parabacteroides distasonis (strain ATCC 8503 / DSM 20701 / CIP 104284 / JCM 5825 / NCTC 11152)).